A 511-amino-acid chain; its full sequence is Synaptotagmin-6 (511 aa).

The Vesicular portion of the chain corresponds to Met1–Ser59. A cysteine motif region spans residues Cys12–Arg38. The helical transmembrane segment at Leu60–Phe80 threads the bilayer. At Trp81–Leu511 the chain is on the cytoplasmic side. 2 disordered regions span residues Glu92 to Leu119 and Thr157 to Gln182. A compositionally biased stretch (low complexity) spans Ser94 to Ser103. 2 stretches are compositionally biased toward polar residues: residues Glu104–Gly113 and Gln160–His172. Residue Ser217 is modified to Phosphoserine. 2 C2 domains span residues Ser230–Lys351 and Asp362–His495. Residues Asp261, Asp267, Asp319, Phe320, Asp321, Ser324, Asp327, Asp393, Asp399, Asp453, and Asp455 each coordinate Ca(2+). Positions Met483 to Leu511 are necessary for cell membrane association (isoform 2).

This sequence belongs to the synaptotagmin family. In terms of assembly, isoform 1: Homodimer; disulfide-linked via the cysteine motif. Isoform 1: Can also form heterodimers with SYT3, SYT7, SYT9 and SYT10. Isoform 1: Interacts with STX1A, STX1B and STX2; the interaction is Ca(2+)-dependent. Isoform 2: Is not able to form homodimer and heterodimers. Ca(2+) serves as cofactor. In terms of tissue distribution, isoform 1 is expressed in the olfactory bulb. Isoform 2 is expressed in the brain (at protein level).

The protein localises to the cytoplasmic vesicle. Its subcellular location is the secretory vesicle. It localises to the synaptic vesicle membrane. The protein resides in the membrane. It is found in the cytoplasm. The protein localises to the cytosol. Its subcellular location is the cell membrane. Functionally, may be involved in Ca(2+)-dependent exocytosis of secretory vesicles through Ca(2+) and phospholipid binding to the C2 domain or may serve as Ca(2+) sensors in the process of vesicular trafficking and exocytosis. May mediate Ca(2+)-regulation of exocytosis in acrosomal reaction in sperm. The protein is Synaptotagmin-6 (Syt6) of Mus musculus (Mouse).